Here is a 102-residue protein sequence, read N- to C-terminus: MAKQKIRIRLKAYDHRVIDQSAEKIVETAKRSGAEVSGPIPLPTEKSVYTIIRAVHMYKDSREQFEQRTHKRLIDIVNPTPKTVDALMGLNLPSGVDIEIKL.

The protein belongs to the universal ribosomal protein uS10 family. As to quaternary structure, part of the 30S ribosomal subunit.

Involved in the binding of tRNA to the ribosomes. The polypeptide is Small ribosomal subunit protein uS10 (Staphylococcus haemolyticus (strain JCSC1435)).